Consider the following 63-residue polypeptide: Large ribosomal subunit protein uL29 (63 aa).

Belongs to the universal ribosomal protein uL29 family.

This chain is Large ribosomal subunit protein uL29, found in Shewanella frigidimarina (strain NCIMB 400).